A 269-amino-acid chain; its full sequence is MARASSGNGSEEAWGALRAPQQQLRELCPGVNNQPYLCESGHCCGETGCCTYYYELWWFWLLWTVLILFSCCCAFRHRRAKLRLQQQQRQREINLLAYHGACHGAGPFPTGSLLDLRFLSTFKPPAYEDVVHRPGTPPPPYTVAPGRPLTASSEQTCCSSSSSCPAHFEGTNVEGVSSHQSAPPHQEGEPGAGVTPASTPPSCRYRRLTGDSGIELCPCPASGEGEPVKEVRVSATLPDLEDYSPCALPPESVPQIFPMGLSSSEGDIP.

Short sequence motifs (PPxY motif) lie at residues 124–127 (PPAY) and 137–141 (PPPPY). 2 disordered regions span residues 169-203 (EGTNVEGVSSHQSAPPHQEGEPGAGVTPASTPPSC) and 249-269 (PPESVPQIFPMGLSSSEGDIP). Positions 174–183 (EGVSSHQSAP) are enriched in polar residues.

As to quaternary structure, interacts with NEDD4. Binds to the WW domain of YAP1, WWP1 and WWP2. Interacts with WWOX. In terms of tissue distribution, expressed in most tissues but at significantly lower levels in placenta, lung, liver, and kidney.

The sequence is that of WW domain-binding protein 1 (WBP1) from Homo sapiens (Human).